The chain runs to 83 residues: Translation initiation factor IF-1 (83 aa).

One can recognise an S1-like domain in the interval 1–72 (MAKEESIEMQ…TRGRIVYREA (72 aa)).

The protein belongs to the IF-1 family. Component of the 30S ribosomal translation pre-initiation complex which assembles on the 30S ribosome in the order IF-2 and IF-3, IF-1 and N-formylmethionyl-tRNA(fMet); mRNA recruitment can occur at any time during PIC assembly.

The protein resides in the cytoplasm. One of the essential components for the initiation of protein synthesis. Stabilizes the binding of IF-2 and IF-3 on the 30S subunit to which N-formylmethionyl-tRNA(fMet) subsequently binds. Helps modulate mRNA selection, yielding the 30S pre-initiation complex (PIC). Upon addition of the 50S ribosomal subunit IF-1, IF-2 and IF-3 are released leaving the mature 70S translation initiation complex. The protein is Translation initiation factor IF-1 of Coxiella burnetii (strain Dugway 5J108-111).